The sequence spans 309 residues: MSSRRRKPEWLRTRPPSGRRFTEIKETLRDRDLNTVCEEANCPNLGDCWSGRDGPGTATFMLLGDRCSRGCNFCDVATGGMDPLDPDEPANVAEAVAEIGLDYVVLTSVDRDDLDDGGAGHFAETIREIKRRDTSVLVEALIPDFQGDTDAVDRIIDADPDVVAHNVETVERLQWPVRDRRAGYEQSLDVLRQIAAADGCYAKTSLMLGVGEYAHEVYRTLGDLSEVGVDIVTFGQYLQPSRSHLEVFEYVTPDTFDVWKRVAETEFGFLYCASGPMVRSSFKAGELFVEALERDGLDIEAARAAAERQ.

[4Fe-4S] cluster-binding residues include C37, C42, C48, C67, C71, C74, and S281. The Radical SAM core domain occupies 53-270 (DGPGTATFML…RVAETEFGFL (218 aa)).

It belongs to the radical SAM superfamily. Lipoyl synthase family. Requires [4Fe-4S] cluster as cofactor.

The protein localises to the cytoplasm. The catalysed reaction is [[Fe-S] cluster scaffold protein carrying a second [4Fe-4S](2+) cluster] + N(6)-octanoyl-L-lysyl-[protein] + 2 oxidized [2Fe-2S]-[ferredoxin] + 2 S-adenosyl-L-methionine + 4 H(+) = [[Fe-S] cluster scaffold protein] + N(6)-[(R)-dihydrolipoyl]-L-lysyl-[protein] + 4 Fe(3+) + 2 hydrogen sulfide + 2 5'-deoxyadenosine + 2 L-methionine + 2 reduced [2Fe-2S]-[ferredoxin]. Its pathway is protein modification; protein lipoylation via endogenous pathway; protein N(6)-(lipoyl)lysine from octanoyl-[acyl-carrier-protein]: step 2/2. In terms of biological role, catalyzes the radical-mediated insertion of two sulfur atoms into the C-6 and C-8 positions of the octanoyl moiety bound to the lipoyl domains of lipoate-dependent enzymes, thereby converting the octanoylated domains into lipoylated derivatives. This is Lipoyl synthase from Natronomonas pharaonis (strain ATCC 35678 / DSM 2160 / CIP 103997 / JCM 8858 / NBRC 14720 / NCIMB 2260 / Gabara) (Halobacterium pharaonis).